A 699-amino-acid chain; its full sequence is Nucleolar and coiled-body phosphoprotein 1 (699 aa).

Positions 10 to 42 constitute a LisH domain; the sequence is VPSDLYPLVLGFLRDNQLSEVANKFAKATGATQ. At lysine 33 the chain carries N6-acetyllysine. A disordered region spans residues 65 to 637; that stretch reads ERKLQANGPV…VREEEIEVDS (573 aa). Glycyl lysine isopeptide (Lys-Gly) (interchain with G-Cter in SUMO2) cross-links involve residues lysine 67 and lysine 76. The Acidic serine cluster 1 repeat unit spans residues 84-95; that stretch reads SSDSEDSSEEEE. Positions 84 to 566 are 11 X 12 AA approximate repeats of an acidic serine cluster; the sequence is SSDSEDSSEE…GKAAKNSEEE (483 aa). The segment covering 86–97 has biased composition (acidic residues); sequence DSEDSSEEEEEV. 3 positions are modified to phosphoserine: serine 87, serine 90, and serine 91. Residue serine 91 is modified to Diphosphoserine. Residues 100–110 are compositionally biased toward low complexity; it reads PPAKKAAVPAK. One copy of the Acidic serine cluster 2 repeat lies at 125-136; it reads ESSSSEESSDDD. A compositionally biased stretch (low complexity) spans 144 to 159; sequence QPVQKGVKPQAKAAKA. One copy of the Acidic serine cluster 3 repeat lies at 167 to 178; that stretch reads SDSDSDSSSEDE. Lysine 186 participates in a covalent cross-link: Glycyl lysine isopeptide (Lys-Gly) (interchain with G-Cter in SUMO2). A Phosphothreonine modification is found at threonine 188. A Glycyl lysine isopeptide (Lys-Gly) (interchain with G-Cter in SUMO2) cross-link involves residue lysine 193. Composition is skewed to low complexity over residues 193–227 and 236–261; these read KAQTKAPPKPARAAPKIANGKAASSSSSSSSSSSS and AATPKKTVPKKQVVAKAPVKAATTPT. The interaction with RPA194 stretch occupies residues 204–382; the sequence is RAAPKIANGK…DDEAPSKPAG (179 aa). The Acidic serine cluster 4 repeat unit spans residues 221–232; it reads SSSSSSSDDSEE. One copy of the Acidic serine cluster 5 repeat lies at 264–275; that stretch reads SSSSEDSSSDEE. A compositionally biased stretch (pro residues) spans 291–301; it reads SVPPPSAPPPK. Acidic residues predominate over residues 321–333; that stretch reads SSEDSSDESDSSS. One copy of the Acidic serine cluster 6 repeat lies at 325 to 336; it reads SSDESDSSSEEE. Residues lysine 342 and lysine 347 each participate in a glycyl lysine isopeptide (Lys-Gly) (interchain with G-Cter in SUMO2) cross-link. Phosphoserine is present on residues serine 362, serine 363, and serine 366. One copy of the Acidic serine cluster 7 repeat lies at 363–375; sequence SDSSDSDSSEDDE. Positions 366–375 are enriched in acidic residues; it reads SDSDSSEDDE. Residues 381–397 show a composition bias toward polar residues; that stretch reads AGTTKNSSNKPAVTTKS. Residues lysine 390 and lysine 396 each participate in a glycyl lysine isopeptide (Lys-Gly) (interchain with G-Cter in SUMO2) cross-link. Serine 397 carries the post-translational modification Phosphoserine. Low complexity predominate over residues 398–409; the sequence is PAVKPAAAPKQP. Glycyl lysine isopeptide (Lys-Gly) (interchain with G-Cter in SUMO2) cross-links involve residues lysine 401 and lysine 407. Lysine 415 carries the N6-acetyllysine; alternate modification. A Glycyl lysine isopeptide (Lys-Gly) (interchain with G-Cter in SUMO1); alternate cross-link involves residue lysine 415. A Glycyl lysine isopeptide (Lys-Gly) (interchain with G-Cter in SUMO2); alternate cross-link involves residue lysine 415. The stretch at 425-436 is one Acidic serine cluster 8 repeat; that stretch reads SSEEESSSSEEE. Glycyl lysine isopeptide (Lys-Gly) (interchain with G-Cter in SUMO2) cross-links involve residues lysine 440 and lysine 452. Low complexity-rich tracts occupy residues 441–476 and 498–523; these read MVATTKPKATAKAALSLPAKQAPQGSRDSSSDSDSS and AGGAAPSKPASAKKGKAESSNSSSSD. The residue at position 456 (serine 456) is a Phosphoserine. One copy of the Acidic serine cluster 9 repeat lies at 470–481; it reads SSDSDSSSSEEE. A Glycyl lysine isopeptide (Lys-Gly) (interchain with G-Cter in SUMO2) cross-link involves residue lysine 505. Serine 508 carries the phosphoserine modification. One copy of the Acidic serine cluster 10 repeat lies at 519–529; it reads SSSSDDSSEEE. Serine 538 is subject to Phosphoserine. Polar residues predominate over residues 547 to 556; the sequence is NGTSALTAQN. Residues 555 to 566 form an Acidic serine cluster 11 repeat; the sequence is QNGKAAKNSEEE. Serine 563 is modified (phosphoserine). Residue lysine 572 forms a Glycyl lysine isopeptide (Lys-Gly) (interchain with G-Cter in SUMO1) linkage. A Glycyl lysine isopeptide (Lys-Gly) (interchain with G-Cter in SUMO2) cross-link involves residue lysine 579. 2 positions are modified to phosphoserine: serine 580 and serine 582. Residue lysine 604 forms a Glycyl lysine isopeptide (Lys-Gly) (interchain with G-Cter in SUMO2) linkage. A phosphothreonine mark is found at threonine 607 and threonine 610. Lysine 613 is covalently cross-linked (Glycyl lysine isopeptide (Lys-Gly) (interchain with G-Cter in SUMO2)). Position 622 is a phosphoserine (serine 622). A compositionally biased stretch (basic and acidic residues) spans 627–637; sequence RVREEEIEVDS. Serine 643 carries the post-translational modification Phosphoserine. Lysine 647 is covalently cross-linked (Glycyl lysine isopeptide (Lys-Gly) (interchain with G-Cter in SUMO2)). Lysine 663 is modified (N6-acetyllysine; alternate). A Glycyl lysine isopeptide (Lys-Gly) (interchain with G-Cter in SUMO2); alternate cross-link involves residue lysine 663. Arginine 683 bears the Omega-N-methylarginine mark. Phosphoserine is present on serine 686. Lysine 695 participates in a covalent cross-link: Glycyl lysine isopeptide (Lys-Gly) (interchain with G-Cter in SUMO2). At serine 698 the chain carries Phosphoserine.

This sequence belongs to the NOLC1 family. Heterodimer; heterodimerizes with TCOF1 following monoubiquitination. Interacts with RNA polymerase I 194 kDa subunit (RPA194) and with casein kinase-II. Interacts with DKC1/NAP57, NOP58 and fibrillarin. In terms of processing, undergoes rapid and massive phosphorylation/dephosphorylation cycles on CK2 and PKC sites. NOLC1 is one of the mostly phosphorylated proteins in the cell. Ubiquitinated. Monoubiquitination by the BCR(KBTBD8) complex promotes the formation of a NOLC1-TCOF1 complex that acts as a platform to connect RNA polymerase I with enzymes responsible for ribosomal processing and modification, leading to remodel the translational program of differentiating cells in favor of neural crest specification. Post-translationally, pyrophosphorylated by 5-diphosphoinositol pentakisphosphate (5-IP7). Serine pyrophosphorylation is achieved by Mg(2+)-dependent, but enzyme independent transfer of a beta-phosphate from a inositol pyrophosphate to a pre-phosphorylated serine residue.

Its subcellular location is the nucleus. It localises to the nucleolus. The protein localises to the cytoplasm. In terms of biological role, nucleolar protein that acts as a regulator of RNA polymerase I by connecting RNA polymerase I with enzymes responsible for ribosomal processing and modification. Required for neural crest specification: following monoubiquitination by the BCR(KBTBD8) complex, associates with TCOF1 and acts as a platform to connect RNA polymerase I with enzymes responsible for ribosomal processing and modification, leading to remodel the translational program of differentiating cells in favor of neural crest specification. Involved in nucleologenesis, possibly by playing a role in the maintenance of the fundamental structure of the fibrillar center and dense fibrillar component in the nucleolus. It has intrinsic GTPase and ATPase activities. This is Nucleolar and coiled-body phosphoprotein 1 from Homo sapiens (Human).